The primary structure comprises 1090 residues: UPF0507 protein SCY_4172 (1090 aa).

The region spanning 289–436 (FSVNQLLTDF…FEDFNKNTGN (148 aa)) is the VPS9 domain.

This sequence belongs to the UPF0507 family.

The polypeptide is UPF0507 protein SCY_4172 (Saccharomyces cerevisiae (strain YJM789) (Baker's yeast)).